The chain runs to 372 residues: Envelope phospholipase OPG057 (372 aa).

A YPPL motif is present at residues 153–156 (YPPL). Residues C185 and C186 are each lipidated (S-palmitoyl cysteine; by host). The 28-residue stretch at 307-334 (FTIQNNTKLLIVDDEYVHITSANFDGTH) folds into the PLD phosphodiesterase domain.

The protein belongs to the orthopoxvirus OPG057 family. Interacts with protein OPG190. In terms of processing, palmitoylated. Attachment of the palmitate moiety is essential for correct intracellular targeting and protein function.

The protein localises to the virion membrane. It is found in the host Golgi apparatus. The protein resides in the host trans-Golgi network. It localises to the host endoplasmic reticulum membrane. The catalysed reaction is a 1,2-diacyl-sn-glycero-3-phosphocholine + H2O = a 1,2-diacyl-sn-glycero-3-phosphate + choline + H(+). Major envelope protein that plays a role in the biogenesis of the viral double membrane and in egress of virus from the host cell. Produces the wrapped form of virus that is required for cell-to-cell spread. Acts as a lipase with broad specificity including phospholipase C, phospholipase A, and triacylglycerol lipase activities. This is Envelope phospholipase OPG057 (OPG057) from Variola virus (isolate Human/India/Ind3/1967) (VARV).